Reading from the N-terminus, the 464-residue chain is L-cystine uptake protein TcyP (464 aa).

10 helical membrane-spanning segments follow: residues 3-23 (TLLV…LYYM), 34-54 (VFTA…IYEP), 73-93 (YVKL…ISAF), 107-127 (GLII…GIAA), 184-204 (PTST…FIGV), 225-245 (IVMR…LALM), 263-283 (FVLA…LLIA), 347-367 (AGIY…IDPL), 371-391 (FILT…GVGG), and 395-415 (FAAL…ALVI).

This sequence belongs to the dicarboxylate/amino acid:cation symporter (DAACS) (TC 2.A.23) family.

It is found in the membrane. Functionally, mediates uptake of L-cystine, the oxidized form of L-cysteine. This is L-cystine uptake protein TcyP from Bacillus cereus (strain ATCC 10987 / NRS 248).